The chain runs to 157 residues: 2-C-methyl-D-erythritol 2,4-cyclodiphosphate synthase (157 aa).

A divalent metal cation is bound by residues Asp8 and His10. 4-CDP-2-C-methyl-D-erythritol 2-phosphate-binding positions include 8 to 10 (DVH) and 34 to 35 (HS). His42 contributes to the a divalent metal cation binding site. 4-CDP-2-C-methyl-D-erythritol 2-phosphate-binding positions include 56 to 58 (DIG), 61 to 65 (FPDTD), 100 to 106 (AQAPKML), 132 to 135 (TTTE), Phe139, and Arg142.

Belongs to the IspF family. In terms of assembly, homotrimer. The cofactor is a divalent metal cation.

The catalysed reaction is 4-CDP-2-C-methyl-D-erythritol 2-phosphate = 2-C-methyl-D-erythritol 2,4-cyclic diphosphate + CMP. Its pathway is isoprenoid biosynthesis; isopentenyl diphosphate biosynthesis via DXP pathway; isopentenyl diphosphate from 1-deoxy-D-xylulose 5-phosphate: step 4/6. Involved in the biosynthesis of isopentenyl diphosphate (IPP) and dimethylallyl diphosphate (DMAPP), two major building blocks of isoprenoid compounds. Catalyzes the conversion of 4-diphosphocytidyl-2-C-methyl-D-erythritol 2-phosphate (CDP-ME2P) to 2-C-methyl-D-erythritol 2,4-cyclodiphosphate (ME-CPP) with a corresponding release of cytidine 5-monophosphate (CMP). This is 2-C-methyl-D-erythritol 2,4-cyclodiphosphate synthase from Photorhabdus laumondii subsp. laumondii (strain DSM 15139 / CIP 105565 / TT01) (Photorhabdus luminescens subsp. laumondii).